A 310-amino-acid polypeptide reads, in one-letter code: Tyrosine recombinase XerC (310 aa).

The region spanning 1–92 (MDELIKEFDR…SLRAFFKYLH (92 aa)) is the Core-binding (CB) domain. The 188-residue stretch at 113–300 (YIPAVLSVDE…SVNRLMAVYD (188 aa)) folds into the Tyr recombinase domain. Active-site residues include R153, K177, H252, R255, and H278. The O-(3'-phospho-DNA)-tyrosine intermediate role is filled by Y287.

It belongs to the 'phage' integrase family. XerC subfamily. As to quaternary structure, forms a cyclic heterotetrameric complex composed of two molecules of XerC and two molecules of XerD.

It localises to the cytoplasm. In terms of biological role, site-specific tyrosine recombinase, which acts by catalyzing the cutting and rejoining of the recombining DNA molecules. The XerC-XerD complex is essential to convert dimers of the bacterial chromosome into monomers to permit their segregation at cell division. It also contributes to the segregational stability of plasmids. This chain is Tyrosine recombinase XerC, found in Syntrophus aciditrophicus (strain SB).